The chain runs to 93 residues: MSGLRVYSTSVTGSREIKSQQSEVTRILDGKRIQYQLVDISQDNALRDEMRTLAGNPKATPPQIVNGDHYCGDYELFVEAVEQNTLQEFLKLA.

Position 2 is an N-acetylserine (Ser2). Positions 2–93 (SGLRVYSTSV…NTLQEFLKLA (92 aa)) constitute a Glutaredoxin domain. An O-linked (GalNAc...) threonine glycan is attached at Thr9.

Belongs to the SH3BGR family. Interacts with MYO1C (via its IQ motifs); the interaction is dependent on calcium and takes place at membrane ruffles. In terms of processing, may be glycosylated. Expressed in heart, liver, lung, kidney, spleen, thymus, ovarian follicles, skeletal muscle, brain, lymph node and mammary epithelial and stromal cells (at protein level).

Its subcellular location is the cytoplasm. It is found in the cytosol. The protein localises to the cell projection. The protein resides in the ruffle membrane. It localises to the nucleus. Could act as a modulator of glutaredoxin biological activity. May play a role in cytoskeleton organization. This chain is SH3 domain-binding glutamic acid-rich-like protein 3, found in Rattus norvegicus (Rat).